Here is a 425-residue protein sequence, read N- to C-terminus: Malate transporter MleP (425 aa).

11 helical membrane-spanning segments follow: residues 11–31, 35–55, 65–85, 96–116, 134–154, 196–216, 246–266, 269–289, 310–330, 339–359, and 401–421; these read GISL…TLLG, LDMV…YFIG, LGGG…FHIV, FMGG…CGSI, IALI…MLIG, IFSQ…IGAL, IKLD…LLMA, ILNK…IVFI, VIMT…LIDL, WQFV…SWFL, and FAQM…GILI.

The protein belongs to the 2-hydroxycarboxylate transporter (2-HCT) (TC 2.A.24) family.

The protein localises to the cell membrane. The catalysed reaction is (S)-lactate(in) + (S)-malate(out) = (S)-lactate(out) + (S)-malate(in). It catalyses the reaction (R)-lactate(in) + (S)-malate(out) = (R)-lactate(out) + (S)-malate(in). It carries out the reaction glycolate(in) + (S)-malate(out) = glycolate(out) + (S)-malate(in). Its function is as follows. Secondary transporter involved in malolactic fermentation. Catalyzes the uptake of divalent malate into the cell coupled to the exit of monovalent lactate, a product of malate degradation (precursor/product exchange). The malate/lactate exchange is electrogenic and results in the generation of a membrane potential. Is highly selective for the S-enantiomer of malate. In the absence of lactate, MleP can also catalyze the proton-dependent transport of malate. In vitro, transports a range of substrates that contain the 2-hydroxycarboxylate motif, HO-CR(2)-COO(-), with a preference for malate, lactate and glycolate. Modification of the OH or the COO(-) groups of the 2-hydroxycarboxylate motif drastically reduces the affinity of the transporter for the substrates, indicating their relevance in substrate recognition. Significant activity is also observed with some 2-oxocarboxylates. Transports only poorly citromalate. Citrate binds to MleP but is not translocated. The sequence is that of Malate transporter MleP from Lactococcus lactis subsp. lactis (strain IL1403) (Streptococcus lactis).